The chain runs to 328 residues: L-lactate dehydrogenase (328 aa).

NAD(+) contacts are provided by residues V18, E39, K46, Y71, and 85 to 86 (GA). The substrate site is built by Q88 and R94. Residues S107, 124 to 126 (AAN), and S149 contribute to the NAD(+) site. 126-129 (NPVD) lines the substrate pocket. 154 to 157 (DSAR) provides a ligand contact to substrate. Beta-D-fructose 1,6-bisphosphate-binding residues include R159 and H174. The active-site Proton acceptor is H181. Y226 carries the phosphotyrosine modification. T235 contributes to the substrate binding site.

This sequence belongs to the LDH/MDH superfamily. LDH family. Homotetramer.

It is found in the cytoplasm. It catalyses the reaction (S)-lactate + NAD(+) = pyruvate + NADH + H(+). Its pathway is fermentation; pyruvate fermentation to lactate; (S)-lactate from pyruvate: step 1/1. Its activity is regulated as follows. Allosterically activated by fructose 1,6-bisphosphate (FBP). Functionally, catalyzes the conversion of lactate to pyruvate. This Streptococcus thermophilus (strain ATCC BAA-250 / LMG 18311) protein is L-lactate dehydrogenase.